A 95-amino-acid polypeptide reads, in one-letter code: Small ribosomal subunit protein bS20c (95 aa).

Residues 76-95 are disordered; that stretch reads NGSAKKAKLTKRLKEKKISL. Basic residues predominate over residues 80–95; that stretch reads KKAKLTKRLKEKKISL.

The protein belongs to the bacterial ribosomal protein bS20 family.

It localises to the plastid. Its subcellular location is the chloroplast. In terms of biological role, binds directly to 16S ribosomal RNA. This chain is Small ribosomal subunit protein bS20c, found in Guillardia theta (Cryptophyte).